The following is a 151-amino-acid chain: Transcriptional regulator MraZ (151 aa).

2 SpoVT-AbrB domains span residues 5-52 (ANAI…PLDE) and 81-124 (AVDL…DEDA).

This sequence belongs to the MraZ family. Forms oligomers.

Its subcellular location is the cytoplasm. It localises to the nucleoid. The sequence is that of Transcriptional regulator MraZ from Pseudomonas fluorescens (strain SBW25).